A 404-amino-acid polypeptide reads, in one-letter code: Cysteine desulfurase IscS (404 aa).

Pyridoxal 5'-phosphate-binding positions include 75–76, Asn-155, Gln-183, and 203–205; these read AT and SGH. Position 206 is an N6-(pyridoxal phosphate)lysine (Lys-206). Thr-243 provides a ligand contact to pyridoxal 5'-phosphate. Cys-328 acts as the Cysteine persulfide intermediate in catalysis. [2Fe-2S] cluster is bound at residue Cys-328.

This sequence belongs to the class-V pyridoxal-phosphate-dependent aminotransferase family. NifS/IscS subfamily. In terms of assembly, homodimer. Forms a heterotetramer with IscU, interacts with other sulfur acceptors. Pyridoxal 5'-phosphate is required as a cofactor.

The protein resides in the cytoplasm. It carries out the reaction (sulfur carrier)-H + L-cysteine = (sulfur carrier)-SH + L-alanine. Its pathway is cofactor biosynthesis; iron-sulfur cluster biosynthesis. In terms of biological role, master enzyme that delivers sulfur to a number of partners involved in Fe-S cluster assembly, tRNA modification or cofactor biosynthesis. Catalyzes the removal of elemental sulfur atoms from cysteine to produce alanine. Functions as a sulfur delivery protein for Fe-S cluster synthesis onto IscU, an Fe-S scaffold assembly protein, as well as other S acceptor proteins. The polypeptide is Cysteine desulfurase IscS (Shewanella baltica (strain OS223)).